We begin with the raw amino-acid sequence, 393 residues long: 6-hydroxy-3-succinoylpyridine 3-monooxygenase HspB (393 aa).

FAD contacts are provided by residues 6 to 35 (RVII…VLEA) and 277 to 287 (MRNGRVILIGD).

This sequence belongs to the PheA/TfdB FAD monooxygenase family. In terms of assembly, homodimer. The cofactor is FAD.

The catalysed reaction is 4-(6-hydroxypyridin-3-yl)-4-oxobutanoate + 2 NADH + O2 + 2 H(+) = 2,5-dihydroxypyridine + succinate semialdehyde + 2 NAD(+) + H2O. The protein operates within alkaloid degradation; nicotine degradation. Inhibited by Cu(2+) and Zn(2+). Functionally, involved in the nicotine degradation. Catalyzes the cleavage of 6-hydroxy-3-succinoylpyridine (HSP) by incorporation of oxygen at the 3-position to produce to 2,5-dihydroxypyridine (DHP) and succinic semialdehyde. This chain is 6-hydroxy-3-succinoylpyridine 3-monooxygenase HspB, found in Pseudomonas putida (strain DSM 28022 / S16).